A 398-amino-acid chain; its full sequence is NADH-quinone oxidoreductase subunit D (398 aa).

It belongs to the complex I 49 kDa subunit family. As to quaternary structure, NDH-1 is composed of 14 different subunits. Subunits NuoB, C, D, E, F, and G constitute the peripheral sector of the complex.

It localises to the cell inner membrane. The catalysed reaction is a quinone + NADH + 5 H(+)(in) = a quinol + NAD(+) + 4 H(+)(out). Its function is as follows. NDH-1 shuttles electrons from NADH, via FMN and iron-sulfur (Fe-S) centers, to quinones in the respiratory chain. The immediate electron acceptor for the enzyme in this species is believed to be ubiquinone. Couples the redox reaction to proton translocation (for every two electrons transferred, four hydrogen ions are translocated across the cytoplasmic membrane), and thus conserves the redox energy in a proton gradient. The polypeptide is NADH-quinone oxidoreductase subunit D (Anaplasma marginale (strain St. Maries)).